The primary structure comprises 557 residues: Leucine-rich glioma-inactivated protein 1 (557 aa).

A signal peptide spans Met-1–Gly-34. The LRRNT domain maps to Lys-35–Leu-72. LRR repeat units lie at residues Ser-92 to Gly-113, His-116 to Gly-137, and Ser-140 to Gly-161. The LRRCT domain maps to Asn-173 to Ile-223. The N-linked (GlcNAc...) asparagine glycan is linked to Asn-192. 7 EAR repeats span residues Glu-225–His-267, Thr-271–Gly-313, Lys-317–Gly-364, Gly-366–Lys-415, Leu-419–Gly-462, Ser-464–Ala-506, and Lys-510–Ile-552. N-linked (GlcNAc...) asparagine glycosylation occurs at Asn-277. Asn-422 is a glycosylation site (N-linked (GlcNAc...) asparagine).

In terms of assembly, oligomer. Interacts with KCNA1 within a complex containing KCNA1, KCNA4 and KCNAB1. Can bind to ADAM11 and ADAM23. Part of a complex containing ADAM22, DLG4/PSD95 and CACNG2 (stargazin). Post-translationally, glycosylated. Expressed in brain. High levels found in hippocampus, thalamic nuclei, neocortex, and molecular and granule cell layers of the cerebellum.

The protein resides in the secreted. The protein localises to the synapse. It is found in the cytoplasm. In terms of biological role, plays a role in suppressing the production of MMP1/3 through the phosphatidylinositol 3-kinase/ERK pathway. Regulates voltage-gated potassium channels assembled from KCNA1, KCNA4 and KCNAB1. It slows down channel inactivation by precluding channel closure mediated by the KCNAB1 subunit. Ligand for ADAM22 that positively regulates synaptic transmission mediated by AMPA-type glutamate receptors. The chain is Leucine-rich glioma-inactivated protein 1 (Lgi1) from Rattus norvegicus (Rat).